We begin with the raw amino-acid sequence, 549 residues long: Glucose-6-phosphate isomerase (549 aa).

Residue E353 is the Proton donor of the active site. Catalysis depends on residues H384 and K512.

Belongs to the GPI family.

It is found in the cytoplasm. The enzyme catalyses alpha-D-glucose 6-phosphate = beta-D-fructose 6-phosphate. Its pathway is carbohydrate biosynthesis; gluconeogenesis. The protein operates within carbohydrate degradation; glycolysis; D-glyceraldehyde 3-phosphate and glycerone phosphate from D-glucose: step 2/4. In terms of biological role, catalyzes the reversible isomerization of glucose-6-phosphate to fructose-6-phosphate. The polypeptide is Glucose-6-phosphate isomerase (Solidesulfovibrio magneticus (strain ATCC 700980 / DSM 13731 / RS-1) (Desulfovibrio magneticus)).